The following is a 78-amino-acid chain: uncharacterized protein (78 aa).

This is an uncharacterized protein from Bacillus subtilis (strain 168).